We begin with the raw amino-acid sequence, 269 residues long: Hydroxyethylthiazole kinase (269 aa).

Substrate is bound at residue M46. Residues R122 and T168 each contribute to the ATP site. A substrate-binding site is contributed by G195.

Belongs to the Thz kinase family. Mg(2+) is required as a cofactor.

It catalyses the reaction 5-(2-hydroxyethyl)-4-methylthiazole + ATP = 4-methyl-5-(2-phosphooxyethyl)-thiazole + ADP + H(+). It functions in the pathway cofactor biosynthesis; thiamine diphosphate biosynthesis; 4-methyl-5-(2-phosphoethyl)-thiazole from 5-(2-hydroxyethyl)-4-methylthiazole: step 1/1. Its function is as follows. Catalyzes the phosphorylation of the hydroxyl group of 4-methyl-5-beta-hydroxyethylthiazole (THZ). This is Hydroxyethylthiazole kinase from Geobacillus kaustophilus (strain HTA426).